A 637-amino-acid chain; its full sequence is Phosphomethylpyrimidine synthase (637 aa).

Residues asparagine 242, methionine 271, tyrosine 300, histidine 336, 356-358, 397-400, and glutamate 436 contribute to the substrate site; these read SRG and DGLR. Histidine 440 is a binding site for Zn(2+). Residue tyrosine 463 coordinates substrate. Histidine 504 contributes to the Zn(2+) binding site. Positions 584, 587, and 592 each coordinate [4Fe-4S] cluster.

The protein belongs to the ThiC family. Homodimer. The cofactor is [4Fe-4S] cluster.

It catalyses the reaction 5-amino-1-(5-phospho-beta-D-ribosyl)imidazole + S-adenosyl-L-methionine = 4-amino-2-methyl-5-(phosphooxymethyl)pyrimidine + CO + 5'-deoxyadenosine + formate + L-methionine + 3 H(+). It functions in the pathway cofactor biosynthesis; thiamine diphosphate biosynthesis. Functionally, catalyzes the synthesis of the hydroxymethylpyrimidine phosphate (HMP-P) moiety of thiamine from aminoimidazole ribotide (AIR) in a radical S-adenosyl-L-methionine (SAM)-dependent reaction. This Bordetella bronchiseptica (strain ATCC BAA-588 / NCTC 13252 / RB50) (Alcaligenes bronchisepticus) protein is Phosphomethylpyrimidine synthase.